The primary structure comprises 589 residues: ATP-dependent lipid A-core flippase (589 aa).

Transmembrane regions (helical) follow at residues L29 to L49, W70 to D90, V157 to V177, M261 to G281, and L283 to K303. Residues V32 to R314 enclose the ABC transmembrane type-1 domain. Residues I346–M582 form the ABC transporter domain. ATP is bound at residue G380–S387.

This sequence belongs to the ABC transporter superfamily. Lipid exporter (TC 3.A.1.106) family. In terms of assembly, homodimer.

The protein localises to the cell inner membrane. It carries out the reaction ATP + H2O + lipid A-core oligosaccharideSide 1 = ADP + phosphate + lipid A-core oligosaccharideSide 2.. In terms of biological role, involved in lipopolysaccharide (LPS) biosynthesis. Translocates lipid A-core from the inner to the outer leaflet of the inner membrane. Transmembrane domains (TMD) form a pore in the inner membrane and the ATP-binding domain (NBD) is responsible for energy generation. In Xanthomonas campestris pv. campestris (strain 8004), this protein is ATP-dependent lipid A-core flippase.